The following is a 580-amino-acid chain: Probable RNA-binding protein CG14230 (580 aa).

The region spanning Thr4–Glu81 is the RRM domain. Residues Arg89 to Gly100 show a composition bias toward basic and acidic residues. 2 disordered regions span residues Arg89–Glu131 and Gln173–Ile211. Polar residues predominate over residues Pro110–Gln120. Ser231 is modified (phosphoserine). 2 stretches are compositionally biased toward acidic residues: residues Glu254–Gln263 and Asn298–Glu313. Disordered regions lie at residues Glu254 to Arg316, Ser333 to Ser395, and Pro463 to Asn520. Basic and acidic residues-rich tracts occupy residues Leu348–Gln358 and Gln365–Ser377. Polar residues predominate over residues Ala386 to Ser395. Position 468 is a phosphoserine (Ser468). Thr475 is modified (phosphothreonine).

This chain is Probable RNA-binding protein CG14230, found in Drosophila melanogaster (Fruit fly).